The following is a 320-amino-acid chain: Ribosomal RNA small subunit methyltransferase H (320 aa).

S-adenosyl-L-methionine contacts are provided by residues 36–38 (GGH), Asp56, Phe82, Asp103, and Gln110.

The protein belongs to the methyltransferase superfamily. RsmH family.

It localises to the cytoplasm. It catalyses the reaction cytidine(1402) in 16S rRNA + S-adenosyl-L-methionine = N(4)-methylcytidine(1402) in 16S rRNA + S-adenosyl-L-homocysteine + H(+). Its function is as follows. Specifically methylates the N4 position of cytidine in position 1402 (C1402) of 16S rRNA. This is Ribosomal RNA small subunit methyltransferase H from Chromobacterium violaceum (strain ATCC 12472 / DSM 30191 / JCM 1249 / CCUG 213 / NBRC 12614 / NCIMB 9131 / NCTC 9757 / MK).